We begin with the raw amino-acid sequence, 261 residues long: Hydroxylase cctR (261 aa).

Residues 38 to 58 form a helical membrane-spanning segment; it reads VFVSLLILSNTISFGLLGWIG. The N-linked (GlcNAc...) asparagine glycan is linked to asparagine 95. 2 consecutive short sequence motifs (HXXHC) follow at residues 146–150 and 176–180; these read HEIHC and HIAHC.

The protein belongs to the ustYa family.

It localises to the membrane. It participates in mycotoxin biosynthesis. Hydroxylase; part of the gene cluster that mediates the biosynthesis of the mycotoxin cyclochlorotine, a hepatotoxic and carcinogenic cyclic chlorinated pentapeptide. Within the pathway, cctR performs the last step by hydroxylating cyclochlorotine to yield hydroxycyclochlorotine. The NRPS cctN initially catalyzes the condensation of L-serine (Ser), Pro, L-2-aminobutyrate (2Abu), Ser, and beta-Phe in this order to produce isocyclotine. After the dichlorination of Pro2 catalyzed by cctP2 to produce isocyclochlorotine, the cctO-mediated transacylation of isocyclochlorotine can furnish cyclochlorotine. The subsequent hydroxylation of cyclochlorotine by cctR yields hydroxycyclochlorotine as the final product. CctP1 probably acts as a phenylalanine aminomutase and provides the uncommon building block beta-Phe. Furthermore, 2Abu can be synthesized from threonine by one of the threonine dehydratases and transaminases localized outside of the cluster. The functions of the remaining proteins encoded by the cluster, cctM and cctT, have not been identified yet. The sequence is that of Hydroxylase cctR from Talaromyces islandicus (Penicillium islandicum).